We begin with the raw amino-acid sequence, 470 residues long: Sperm-associated antigen 8 (470 aa).

Positions 1–21 (METTESTEGSLSRSCDVQPSS) are enriched in polar residues. Disordered stretches follow at residues 1 to 70 (METT…PPAH), 117 to 178 (SGTC…GQGP), and 302 to 321 (LTTQPQSPMSSSTTQRDSYQ). Residues 27–48 (PSEPVPSSSSSPRSTAPAEAPA) show a composition bias toward low complexity. Over residues 51-60 (SVLTEPSSDS) the composition is skewed to polar residues. Low complexity-rich tracts occupy residues 122-175 (LGQS…ADPG) and 303-316 (TTQPQSPMSSSTTQ). Mn stretches follow at residues 312–325 (SSTTQRDSYQLPRH) and 364–378 (ESVTHHDYRVELVRA).

It belongs to the SPAG8 family. In terms of assembly, microtubule inner protein component of sperm flagellar doublet microtubules. Interacts with FHL5 (via second LIM domain). Interacts with RANBP9. As to expression, expressed in testis (at protein level). Not detected in brain, heart, kidney, spleen, liver, lung, thymus and colon (at protein level).

The protein localises to the cytoplasm. The protein resides in the nucleus. It localises to the cytoplasmic vesicle. It is found in the secretory vesicle. Its subcellular location is the acrosome. The protein localises to the cytoskeleton. The protein resides in the microtubule organizing center. It localises to the spindle. It is found in the cilium axoneme. Its subcellular location is the flagellum axoneme. Its function is as follows. Microtubule inner protein (MIP) part of the dynein-decorated doublet microtubules (DMTs) in cilia axoneme, which is required for motile cilia beating. Plays a role in spermatogenesis by enhancing the binding of CREM isoform tau to its coactivator FHL5 and increasing the FHL5-regulated transcriptional activation of CREM isoform tau. Involved in the acrosome reaction and in binding of sperm to the zona pellucida. Plays a role in regulation of the cell cycle by controlling progression through the G2/M phase, possibly by delaying the activation of CDK1 which is required for entry into mitosis. May play a role in fertility and microtubule formation through interaction with RANBP9. The polypeptide is Sperm-associated antigen 8 (Mus musculus (Mouse)).